The sequence spans 933 residues: Potassium voltage-gated channel subfamily KQT member 5 (933 aa).

At 1 to 126 (MPRHHAGGEE…YNVLERPRGW (126 aa)) the chain is on the cytoplasmic side. A Phosphoserine modification is found at Ser-89. Residues 127–147 (AFVYHAFVFLLVFGCLILSVF) form a helical membrane-spanning segment. Topologically, residues 148–157 (STIPEHTKLA) are extracellular. The chain crosses the membrane as a helical span at residues 158–178 (SSCLLILEFVMIVVFGLEFII). Residues 179–201 (RIWSAGCCCRYRGWQGRLRFARK) are Cytoplasmic-facing. The chain crosses the membrane as a helical span at residues 202–222 (PFCVIDTIVLIASIAVVSAKT). Topologically, residues 223-230 (QGNIFATS) are extracellular. A helical; Voltage-sensor membrane pass occupies residues 231–253 (ALRSLRFLQILRMVRMDRRGGTW). Residues Arg-249 and Lys-265 each coordinate a 1,2-diacyl-sn-glycero-3-phospho-(1D-myo-inositol-4,5-bisphosphate). Residues 254 to 267 (KLLGSVVYAHSKEL) lie on the Cytoplasmic side of the membrane. The chain crosses the membrane as a helical span at residues 268-288 (ITAWYIGFLVLIFSSFLVYLV). The Extracellular segment spans residues 289–299 (EKDANKEFSTY). Positions 300-320 (ADALWWGTITLTTIGYGDKTP) form an intramembrane region, pore-forming. At 321–326 (LTWLGR) the chain is on the extracellular side. Residues 327 to 347 (LLSAGFALLGISFFALPAGIL) form a helical membrane-spanning segment. The Cytoplasmic segment spans residues 348–933 (GSGFALKVQE…ALSLPHVKLN (586 aa)). Lys-362 lines the a 1,2-diacyl-sn-glycero-3-phospho-(1D-myo-inositol-4,5-bisphosphate) pocket. The interval 371–379 (AANLIQCVW) is interaction with CALM. A disordered region spans residues 405–465 (SPTKKEQGEA…EGSPTKVQKS (61 aa)). Residues 432-441 (RGQSIKSRQA) are compositionally biased toward polar residues. Ser-448 is modified (phosphoserine). An interaction with CALM region spans residues 522–529 (VIRAIRIM). The tract at residues 578 to 598 (KGQMTSDKKSREKITAEHETT) is disordered. Basic and acidic residues predominate over residues 583-598 (SDKKSREKITAEHETT). Ser-832 is subject to Phosphoserine. A disordered region spans residues 878–933 (GAEETETDTFDGTPPPAGEAAFSSDSLRTGRSRSSQNICKTGDSTDALSLPHVKLN). Residues 900–924 (SSDSLRTGRSRSSQNICKTGDSTDA) show a composition bias toward polar residues.

The protein belongs to the potassium channel family. KQT (TC 1.A.1.15) subfamily. Kv7.5/KCNQ5 sub-subfamily. In terms of assembly, homotetramer; forms a functional homotetrameric channel resulting in the expression of a small M-current. Heterotetramer with KCNQ3; forms heterotetrameric M-channel responsible for the native M-current. Heterotetramer with KCNQ1; forms a functional voltage-gated potassium channel. Interacts (via C-terminus) with calmodulin/CALM; forms a heterooctameric structure (with 4:4 KCNQ1:CALM stoichiometry); the interaction is calcium-independent, constitutive and participates in the channel function. Strongly expressed in brain. Also expressed in colon, lung and uterus.

The protein localises to the cell membrane. It catalyses the reaction K(+)(in) = K(+)(out). Its activity is regulated as follows. Phosphatidylinositol-4,5-bisphosphate (PIP2) is essential to activate KCNQ5 channel by inducing the coupling of the voltage-sensing domain (VSD) and the pore-forming domain (PD). Calcium suppresses KCNQ5 channel current through calcium-bound CALM C-terminus. Therefore CALM acts as calcium sensor that controls channel activity. Zinc potentiates channel activity in a pH-dependent manner. The activity is modulated by small changes in cell volume. Activated by the anticonvulsant retigabine. Inhibited by linopirdine and XE991. Functionally, pore-forming subunit of the voltage-gated potassium (Kv) channel broadly expressed in brain and skeletal muscle and involved in the regulation of neuronal excitability. Associates with KCNQ3/Kv7.3 pore-forming subunit to form a potassium channel which contributes to M-type current, a slowly activating and deactivating potassium conductance which plays a critical role in determining the subthreshold electrical excitability of neurons. Contributes, with other potassium channels, to the molecular diversity of a heterogeneous population of M-channels, varying in kinetic and pharmacological properties, which underlie this physiologically important current. Also forms a functional channel with KCNQ1/Kv7.1 subunit that may contribute to vasoconstriction and hypertension. Channel may be selectively permeable in vitro to other cations besides potassium, in decreasing order of affinity K(+) = Rb(+) &gt; Cs(+) &gt; Na(+). The polypeptide is Potassium voltage-gated channel subfamily KQT member 5 (Mus musculus (Mouse)).